The sequence spans 95 residues: UPF0473 protein BPUM_2377 (95 aa).

It belongs to the UPF0473 family.

The protein is UPF0473 protein BPUM_2377 of Bacillus pumilus (strain SAFR-032).